We begin with the raw amino-acid sequence, 425 residues long: Proteinase-activated receptor 1 (425 aa).

The first 21 residues, 1–21, serve as a signal peptide directing secretion; that stretch reads MGPRRLLLVAACLCLCGPLLS. Positions 22–41 are cleaved as a propeptide — removed for receptor activation; the sequence is ARTRARRPASKATNATLDPR. 3 N-linked (GlcNAc...) asparagine glycosylation sites follow: Asn-35, Asn-62, and Asn-75. Topologically, residues 42–102 are extracellular; the sequence is SFLLRNPNDK…SGYLTSSWLT (61 aa). Residues 103–128 form a helical membrane-spanning segment; it reads LFVPSVYTGVFVVSLPVNIMAIVVFI. Residues 129–137 lie on the Cytoplasmic side of the membrane; that stretch reads LKMKVKKPA. A helical membrane pass occupies residues 138-157; that stretch reads VVYMLHLATADVLFVSVLPF. Topologically, residues 158 to 176 are extracellular; that stretch reads KISYYLSGSDWQFGSELCR. A disulfide bridge links Cys-175 with Cys-254. The chain crosses the membrane as a helical span at residues 177-198; that stretch reads FVTAAFYCNMYASILLMTVISI. Over 199–218 the chain is Cytoplasmic; it reads DRFLAVVYPMQSLSWRTLGR. Residues 219 to 239 traverse the membrane as a helical segment; sequence ASFTCLAIWALAIAGVVPLLL. Residues 240–268 lie on the Extracellular side of the membrane; the sequence is KEQTIQVPGLNITTCHDVLNETLLEGYYA. Residues Asn-250 and Asn-259 are each glycosylated (N-linked (GlcNAc...) asparagine). The chain crosses the membrane as a helical span at residues 269–288; it reads YYFSAFSAVFFFVPLIISTV. At 289 to 311 the chain is on the cytoplasmic side; it reads CYVSIIRCLSSSTVANRSKKSRA. The chain crosses the membrane as a helical span at residues 312-334; that stretch reads LFLSAAVFCIFIICFGPTNILLI. Residues 335–350 are Extracellular-facing; that stretch reads AHYSFLSHTSTTEAAY. A helical membrane pass occupies residues 351 to 374; it reads FAYLLCVCVSSISCCIDPLIYYYA. The Cytoplasmic segment spans residues 375 to 425; the sequence is SSECQRYVYSILCCKESSDPSSSNSSGQLMASKMDTCSSNLNNSIYKKLLT. Position 418 is a phosphoserine (Ser-418).

The protein belongs to the G-protein coupled receptor 1 family. Proteolytic cleavage by thrombin generates a new N-terminus that functions as a tethered ligand. Also proteolytically cleaved by cathepsin CTSG. Cleavage at 41-Arg-|-Ser-42 by CTSG results in receptor activation while cleavage at 55-Phe-|-Trp-56 results in inhibition of receptor activation. Post-translationally, phosphorylated in the C-terminal tail; probably mediating desensitization prior to the uncoupling and internalization of the receptor.

It localises to the cell membrane. In terms of biological role, high affinity receptor that binds the activated thrombin, leading to calcium release from intracellular stores. The thrombin-activated receptor signaling pathway is mediated through PTX-insensitive G proteins, activation of phospholipase C resulting in the production of 1D-myo-inositol 1,4,5-trisphosphate (InsP3) which binds to InsP3 receptors causing calcium release from the stores. In astrocytes, the calcium released into the cytosol allows the Ca(2+)-dependent release of L-glutamate into the synaptic cleft through BEST1, that targets the neuronal postsynaptic GRIN2A/NMDAR receptor resulting in the synaptic plasticity regulation. May play a role in platelets activation and in vascular development. Mediates up-regulation of pro-inflammatory cytokines, such as MCP-1/CCL2 and IL6, triggered by coagulation factor Xa (F10) in cardiac fibroblasts and umbilical vein endothelial cells. The protein is Proteinase-activated receptor 1 of Papio hamadryas (Hamadryas baboon).